Consider the following 90-residue polypeptide: MNITDVRIRKISAEGKMKAIVSVTFENQFVVHDIKVIEGQNGLFIAMPSRKTPDGEFKDIAHPINTETREQIQKAILDEYEKVKNLDVQE.

Belongs to the SpoVG family.

In terms of biological role, could be involved in septation. This Clostridium perfringens (strain ATCC 13124 / DSM 756 / JCM 1290 / NCIMB 6125 / NCTC 8237 / Type A) protein is Putative septation protein SpoVG.